We begin with the raw amino-acid sequence, 3674 residues long: Spectrin beta chain, non-erythrocytic 5 (3674 aa).

Positions 1–37 (MAGQPHSPRELLGAAGHRSRRPSTELRVPPSPSLTMD) are disordered. An actin-binding region spans residues 1 to 279 (MAGQPHSPRE…IMTYVSLYYH (279 aa)). 2 Calponin-homology (CH) domains span residues 54–159 (QMQE…LRFQ) and 177–282 (LSTK…HYCS). Spectrin repeat units follow at residues 307–416 (LQTQ…ALQQ), 428–529 (ARRF…RKQV), 642–742 (AEFL…ARLQ), 747–810 (VLQY…QGRA), 900–996 (GFCS…AVQL), 1103–1206 (ARQS…WLQE), 1209–1311 (ELQK…RQLL), and 1315–1417 (QLQE…ELQQ). A disordered region spans residues 1441-1469 (ALQSSETGQDLRSSQRLQKRHQQLESESR). Over residues 1442–1456 (LQSSETGQDLRSSQR) the composition is skewed to polar residues. Spectrin repeat units follow at residues 1521–1624 (ELHQ…CLQQ), 1628–1727 (FQQY…RELE), 1731–1835 (RLHE…ALRD), 1842–1940 (VHRD…AQLE), 1944–2046 (LLAR…ERLQ), 2052–2146 (QLFL…HALH), 2150–2253 (LMAS…ELED), 2256–2361 (NFLE…QQLE), 2366–2467 (IHVL…EALD), 2471–2574 (QAQK…QLQQ), 2577–2680 (ELQL…RLEE), 2683–2784 (QLQA…AKLQ), 2791–2890 (RLRR…TALE), 2894–2997 (LLLK…LLQQ), 3000–3103 (EAQQ…GLQE), 3106–3209 (QLHQ…ENLA), 3213–3311 (EVHS…QWLA), 3318–3415 (AFLG…RWQR), and 3422–3488 (LQKL…EQEL). Positions 3533–3641 (TPTMEGSLEF…WWRALGSTAA (109 aa)) constitute a PH domain.

Belongs to the spectrin family. In terms of assembly, probably associates with an alpha chain. Interacts (via C-terminus) with TRPC4. As to expression, expressed at very low levels in many tissues, with strongest expression in cerebellum, spinal cord, stomach, pituitary gland, liver, pancreas, salivary gland, kidney, bladder, and heart.

The protein resides in the cytoplasm. The protein localises to the cytoskeleton. The sequence is that of Spectrin beta chain, non-erythrocytic 5 (SPTBN5) from Homo sapiens (Human).